A 344-amino-acid chain; its full sequence is Selenide, water dikinase (344 aa).

Residue Cys16 is part of the active site. ATP is bound by residues Lys19 and 47 to 49; that span reads SRD. Position 50 (Asp50) interacts with Mg(2+). Residues Asp67, Asp90, and 138 to 140 contribute to the ATP site; that span reads GHS. Mg(2+) is bound at residue Asp90. Asp226 is a binding site for Mg(2+).

The protein belongs to the selenophosphate synthase 1 family. Class I subfamily. Homodimer. The cofactor is Mg(2+).

The catalysed reaction is hydrogenselenide + ATP + H2O = selenophosphate + AMP + phosphate + 2 H(+). Synthesizes selenophosphate from selenide and ATP. The protein is Selenide, water dikinase of Pseudomonas putida (strain ATCC 47054 / DSM 6125 / CFBP 8728 / NCIMB 11950 / KT2440).